A 905-amino-acid chain; its full sequence is Protein translocase subunit SecA (905 aa).

Residues Gln-89, 107–111, and Asp-502 contribute to the ATP site; that span reads GEGKT. Zn(2+) is bound by residues Cys-889, Cys-891, Cys-900, and His-901.

Belongs to the SecA family. As to quaternary structure, monomer and homodimer. Part of the essential Sec protein translocation apparatus which comprises SecA, SecYEG and auxiliary proteins SecDF-YajC and YidC. Requires Zn(2+) as cofactor.

The protein resides in the cell inner membrane. It is found in the cytoplasm. It catalyses the reaction ATP + H2O + cellular proteinSide 1 = ADP + phosphate + cellular proteinSide 2.. Part of the Sec protein translocase complex. Interacts with the SecYEG preprotein conducting channel. Has a central role in coupling the hydrolysis of ATP to the transfer of proteins into and across the cell membrane, serving both as a receptor for the preprotein-SecB complex and as an ATP-driven molecular motor driving the stepwise translocation of polypeptide chains across the membrane. This is Protein translocase subunit SecA from Bartonella tribocorum (strain CIP 105476 / IBS 506).